The sequence spans 127 residues: Secreted RxLR effector protein 7 (127 aa).

The first 21 residues, 1–21, serve as a signal peptide directing secretion; sequence MRSAYYVLTALLVVASSQVAA. Residues 48–65 carry the RxLR-dEER motif; the sequence is RFLRESRDVHGNVANEER.

Belongs to the RxLR effector family.

Its subcellular location is the secreted. The protein localises to the host nucleus. It localises to the host cytoplasm. Functionally, secreted effector that completely suppresses the host cell death induced by cell death-inducing proteins. The protein is Secreted RxLR effector protein 7 of Plasmopara viticola (Downy mildew of grapevine).